A 478-amino-acid chain; its full sequence is Calcitonin receptor (478 aa).

A signal peptide spans 1–22; sequence MRFTFTRQFLAFFILISNPASI. The Extracellular portion of the chain corresponds to 23-146; it reads LPRSENLTFP…FTPEKLQNAY (124 aa). N-linked (GlcNAc...) asparagine glycans are attached at residues asparagine 28, asparagine 73, asparagine 125, and asparagine 130. Disulfide bonds link cysteine 55–cysteine 81, cysteine 72–cysteine 112, and cysteine 95–cysteine 134. Residues 147–169 form a helical membrane-spanning segment; the sequence is VLYYLAIVGHSMSIITLVVSLGI. Over 170–181 the chain is Cytoplasmic; that stretch reads FVYFRSLGCQRV. A helical membrane pass occupies residues 182-202; the sequence is TLHKNMFLTYILNSMIIIIHL. At 203–219 the chain is on the extracellular side; that stretch reads VEVVPNGELVRKDPVSC. A disulfide bond links cysteine 219 and cysteine 289. The helical transmembrane segment at 220 to 242 threads the bilayer; that stretch reads KILHFFHQYMMACNYFWMLCEGI. Residues 243-259 lie on the Cytoplasmic side of the membrane; it reads YLHTLIVVSVFNEAKHL. The chain crosses the membrane as a helical span at residues 260–280; it reads RWYYLLGWGFPLVPTTIHAIT. The Extracellular segment spans residues 281–296; it reads RALYFNDNCWISVDTH. The helical transmembrane segment at 297–320 threads the bilayer; it reads LLYIIHGPVMVALVVNFFFLLNIV. The Cytoplasmic portion of the chain corresponds to 321–340; the sequence is RVLVTKMRETHEAESYMYLK. Residues 341 to 359 traverse the membrane as a helical segment; sequence AVKATMILVPLLGIQFVVF. Residues 360–367 lie on the Extracellular side of the membrane; sequence PWRPSNKV. A helical membrane pass occupies residues 368-394; it reads LGKIYDYFMHSLIHFQGFFVATIYCFC. Over 395 to 478 the chain is Cytoplasmic; sequence NNEVQTTLKR…LNIIEKESSA (84 aa).

The protein belongs to the G-protein coupled receptor 2 family. In terms of assembly, heterodimer of CALCR and RAMP1, RAMP2 or RAMP3; the receptor complexes function as AMYR1, AMYR2 and AMYR3 receptors, respectively, and respond to amylin/IAPP, calcitonin/CT and CGRP1 ligands. Interacts with GPRASP2.

It localises to the cell membrane. In terms of biological role, g protein-coupled receptor activated by ligand peptides amylin (IAPP), calcitonin (CT/CALCA) and calcitonin gene-related peptide type 1 (CGRP1/CALCA). CALCR interacts with receptor-activity-modifying proteins RAMP1, 2 and 3 to form receptor complexes AMYR1, 2 and 3, respectively. IAPP, CT and CGRP1 activate CALCR and AMYRs with distinct modes of receptor activation resulting in specific phenotypes. Ligand binding causes a conformation change that triggers signaling via guanine nucleotide-binding proteins (G proteins) and modulates the activity of downstream effectors. Activates cAMP-dependent pathway. In Cavia porcellus (Guinea pig), this protein is Calcitonin receptor.